Consider the following 416-residue polypeptide: L-cysteine:1D-myo-inositol 2-amino-2-deoxy-alpha-D-glucopyranoside ligase (416 aa).

Cys45 is a binding site for Zn(2+). L-cysteinyl-5'-AMP-binding positions include 45–48 (CGIT), Thr60, and 83–85 (NVT). The 'HIGH' region signature appears at 47 to 57 (ITPYDSTHLGH). The short motif at 191 to 196 (ERGGDP) is the 'ERGGDP' region element. L-cysteinyl-5'-AMP is bound at residue Trp232. Cys236 contacts Zn(2+). 254–256 (GSD) lines the L-cysteinyl-5'-AMP pocket. Position 261 (His261) interacts with Zn(2+). Val286 is a binding site for L-cysteinyl-5'-AMP. The 'KMSKS' region signature appears at 292–296 (KMSKS).

Belongs to the class-I aminoacyl-tRNA synthetase family. MshC subfamily. Monomer. Requires Zn(2+) as cofactor.

It catalyses the reaction 1D-myo-inositol 2-amino-2-deoxy-alpha-D-glucopyranoside + L-cysteine + ATP = 1D-myo-inositol 2-(L-cysteinylamino)-2-deoxy-alpha-D-glucopyranoside + AMP + diphosphate + H(+). Catalyzes the ATP-dependent condensation of GlcN-Ins and L-cysteine to form L-Cys-GlcN-Ins. This chain is L-cysteine:1D-myo-inositol 2-amino-2-deoxy-alpha-D-glucopyranoside ligase, found in Brachybacterium faecium (strain ATCC 43885 / DSM 4810 / JCM 11609 / LMG 19847 / NBRC 14762 / NCIMB 9860 / 6-10).